The following is a 374-amino-acid chain: Phosphate acyltransferase (374 aa).

This sequence belongs to the PlsX family. Homodimer. Probably interacts with PlsY.

The protein resides in the cytoplasm. The enzyme catalyses a fatty acyl-[ACP] + phosphate = an acyl phosphate + holo-[ACP]. It functions in the pathway lipid metabolism; phospholipid metabolism. Functionally, catalyzes the reversible formation of acyl-phosphate (acyl-PO(4)) from acyl-[acyl-carrier-protein] (acyl-ACP). This enzyme utilizes acyl-ACP as fatty acyl donor, but not acyl-CoA. This chain is Phosphate acyltransferase, found in Gluconacetobacter diazotrophicus (strain ATCC 49037 / DSM 5601 / CCUG 37298 / CIP 103539 / LMG 7603 / PAl5).